The sequence spans 147 residues: C-glycoside deglycosidase beta subunit (147 aa).

It belongs to the C-glycoside deglycosidase beta subunit family. In terms of assembly, heterooctamer composed of four alpha subunits (DfgA) and four beta subunits (DfgB). It depends on Mn(2+) as a cofactor.

The enzyme catalyses 3''-dehydroisoorientin = 1,5-anhydro-D-erythro-hex-1-en-3-ulose + luteolin. The catalysed reaction is 3''-dehydroisovitexin = 1,5-anhydro-D-erythro-hex-1-en-3-ulose + apigenin. With respect to regulation, activity is strongly reduced in the presence of chelating agents. Its function is as follows. Carbon-carbon bond-cleaving enzyme which participates in the metabolism of C-glycosides. Acts on the C6-glycosylated compounds 3''-dehydroisoorientin (3''-oxo-homoorientin) and 3''-dehydroisovitexin (3''-oxo-isovitexin). This is C-glycoside deglycosidase beta subunit from Eubacterium cellulosolvens (strain ATCC 43171 / JCM 9499 / 6) (Cillobacterium cellulosolvens).